Reading from the N-terminus, the 1102-residue chain is Carbamoyl phosphate synthase large chain (1102 aa).

The segment at 1 to 408 (MPKRSDIQSV…ALQKALRSLE (408 aa)) is carboxyphosphate synthetic domain. Residues arginine 129, arginine 175, glycine 181, glycine 182, glutamate 214, isoleucine 216, glutamate 221, glycine 247, valine 248, histidine 249, glutamine 291, and glutamate 305 each contribute to the ATP site. The ATP-grasp 1 domain occupies 137 to 334 (EAVKEKIGYG…IAKIAAKLAV (198 aa)). The Mg(2+) site is built by glutamine 291, glutamate 305, and asparagine 307. Positions 291, 305, and 307 each coordinate Mn(2+). Positions 409–551 (KKGSQFAFTG…YFYSSYDEES (143 aa)) are oligomerization domain. The tract at residues 552–954 (EVAPRTKPAV…AYAKSQAGAY (403 aa)) is carbamoyl phosphate synthetic domain. The ATP-grasp 2 domain maps to 682-873 (GRVLAEAGLP…LAKAAARISL (192 aa)). Residues arginine 718, arginine 757, leucine 759, glutamate 764, glycine 789, isoleucine 790, histidine 791, serine 792, glutamine 832, and glutamate 844 each coordinate ATP. 3 residues coordinate Mg(2+): glutamine 832, glutamate 844, and asparagine 846. Residues glutamine 832, glutamate 844, and asparagine 846 each contribute to the Mn(2+) site. Residues 955–1100 (GPLPTAGRAF…QEHAEHLTAA (146 aa)) form the MGS-like domain. Positions 955-1102 (GPLPTAGRAF…HAEHLTAARD (148 aa)) are allosteric domain.

The protein belongs to the CarB family. As to quaternary structure, composed of two chains; the small (or glutamine) chain promotes the hydrolysis of glutamine to ammonia, which is used by the large (or ammonia) chain to synthesize carbamoyl phosphate. Tetramer of heterodimers (alpha,beta)4. Requires Mg(2+) as cofactor. Mn(2+) serves as cofactor.

The catalysed reaction is hydrogencarbonate + L-glutamine + 2 ATP + H2O = carbamoyl phosphate + L-glutamate + 2 ADP + phosphate + 2 H(+). It catalyses the reaction hydrogencarbonate + NH4(+) + 2 ATP = carbamoyl phosphate + 2 ADP + phosphate + 2 H(+). The protein operates within amino-acid biosynthesis; L-arginine biosynthesis; carbamoyl phosphate from bicarbonate: step 1/1. Its pathway is pyrimidine metabolism; UMP biosynthesis via de novo pathway; (S)-dihydroorotate from bicarbonate: step 1/3. In terms of biological role, large subunit of the glutamine-dependent carbamoyl phosphate synthetase (CPSase). CPSase catalyzes the formation of carbamoyl phosphate from the ammonia moiety of glutamine, carbonate, and phosphate donated by ATP, constituting the first step of 2 biosynthetic pathways, one leading to arginine and/or urea and the other to pyrimidine nucleotides. The large subunit (synthetase) binds the substrates ammonia (free or transferred from glutamine from the small subunit), hydrogencarbonate and ATP and carries out an ATP-coupled ligase reaction, activating hydrogencarbonate by forming carboxy phosphate which reacts with ammonia to form carbamoyl phosphate. This chain is Carbamoyl phosphate synthase large chain, found in Streptomyces griseus subsp. griseus (strain JCM 4626 / CBS 651.72 / NBRC 13350 / KCC S-0626 / ISP 5235).